A 445-amino-acid polypeptide reads, in one-letter code: UPF0210 protein SSU05_0296 (445 aa).

It belongs to the UPF0210 family. In terms of assembly, homodimer.

This is UPF0210 protein SSU05_0296 from Streptococcus suis (strain 05ZYH33).